A 539-amino-acid chain; its full sequence is Chaperone Ric-8A (539 aa).

Positions 506 to 539 (PMGVTSDGRLGPLDEAAQKMLQRQESSDLDSDSD) are disordered.

The protein belongs to the synembryn family.

It localises to the cytoplasm. It is found in the cell cortex. In terms of biological role, chaperone that specifically binds and folds nascent G alpha proteins prior to G protein heterotrimer formation, promoting their stability and activity: folds GNAI1, GNAO1, GNA13 and GNAQ. Does not fold G(s) G-alpha proteins GNAS nor GNAL. Also acts as a guanine nucleotide exchange factor (GEF) for G alpha proteins by stimulating exchange of bound GDP for free GTP. This chain is Chaperone Ric-8A (ric8a), found in Xenopus laevis (African clawed frog).